The primary structure comprises 218 residues: MRLILLGAPGAGKGTQATFICQKYGIPQISTGDMLRAAVKAGTPLGIEAKKVMDAGGLVSDDLIINLVKERIAQSDCAAGFLFDGFPRTIPQADAMKAAGVKLDYVLEIDVPFDAIIERMSGRRSHAASGRTYHVKFNPPKVAGVDDVTGEPLIQRDDDKEETVKKRLEVYSAQTRPLVDYYSNWAKAEPAAAPKYRAISGTGGVDEITARAFAALAG.

Glycine 10–threonine 15 contributes to the ATP binding site. Residues serine 30–valine 59 are NMP. AMP is bound by residues threonine 31, arginine 36, glycine 57 to valine 59, glycine 85 to arginine 88, and glutamine 92. Residues glycine 122–aspartate 159 form an LID region. ATP is bound by residues arginine 123 and threonine 132–tyrosine 133. 2 residues coordinate AMP: arginine 156 and arginine 167. Glycine 203 contacts ATP.

Belongs to the adenylate kinase family. In terms of assembly, monomer.

It localises to the cytoplasm. The catalysed reaction is AMP + ATP = 2 ADP. It functions in the pathway purine metabolism; AMP biosynthesis via salvage pathway; AMP from ADP: step 1/1. Its function is as follows. Catalyzes the reversible transfer of the terminal phosphate group between ATP and AMP. Plays an important role in cellular energy homeostasis and in adenine nucleotide metabolism. This chain is Adenylate kinase, found in Albidiferax ferrireducens (strain ATCC BAA-621 / DSM 15236 / T118) (Rhodoferax ferrireducens).